We begin with the raw amino-acid sequence, 607 residues long: Probable LRR receptor-like serine/threonine-protein kinase At5g65240 (607 aa).

The N-terminal stretch at 1-24 is a signal peptide; sequence MALLIITALVFSSLWSSVSPDAQG. The Extracellular portion of the chain corresponds to 25–219; sequence DALFALRSSL…SGDSSSRKTG (195 aa). N-linked (GlcNAc...) asparagine glycosylation is found at N74 and N110. LRR repeat units follow at residues 87–111, 112–135, 137–159, and 160–183; these read LTTL…IGNL, SSLT…LGNL, NLQF…LTGL, and SKLI…LFKI. 4 N-linked (GlcNAc...) asparagine glycosylation sites follow: N149, N171, N187, and N192. The helical transmembrane segment at 220–240 threads the bilayer; it reads IIAGVVSGIAVILLGFFFFFF. Over 241-607 the chain is Cytoplasmic; the sequence is CKDKHKGYKR…QDAIELSGGR (367 aa). At T281 the chain carries Phosphothreonine. The region spanning 284–568 is the Protein kinase domain; the sequence is FSEKNVLGQG…EGEGLAERWE (285 aa). 290-298 is an ATP binding site; it reads LGQGGFGKV. At T307 the chain carries Phosphothreonine. Position 312 (K312) interacts with ATP. Position 365 is a phosphoserine (S365). The Proton acceptor role is filled by D411. A phosphothreonine mark is found at T444, T445, and T450. At S460 the chain carries Phosphoserine. T461 is subject to Phosphothreonine. A Phosphoserine modification is found at S465. T541 carries the phosphothreonine modification.

It belongs to the protein kinase superfamily. Ser/Thr protein kinase family.

The protein resides in the cell membrane. It carries out the reaction L-seryl-[protein] + ATP = O-phospho-L-seryl-[protein] + ADP + H(+). It catalyses the reaction L-threonyl-[protein] + ATP = O-phospho-L-threonyl-[protein] + ADP + H(+). This chain is Probable LRR receptor-like serine/threonine-protein kinase At5g65240, found in Arabidopsis thaliana (Mouse-ear cress).